The sequence spans 116 residues: Large ribosomal subunit protein bL19 (116 aa).

Belongs to the bacterial ribosomal protein bL19 family.

In terms of biological role, this protein is located at the 30S-50S ribosomal subunit interface and may play a role in the structure and function of the aminoacyl-tRNA binding site. This Actinobacillus pleuropneumoniae serotype 5b (strain L20) protein is Large ribosomal subunit protein bL19.